Reading from the N-terminus, the 120-residue chain is Prefoldin subunit beta (120 aa).

The protein belongs to the prefoldin subunit beta family. As to quaternary structure, heterohexamer of two alpha and four beta subunits.

Its subcellular location is the cytoplasm. Molecular chaperone capable of stabilizing a range of proteins. Seems to fulfill an ATP-independent, HSP70-like function in archaeal de novo protein folding. The sequence is that of Prefoldin subunit beta (pfdB) from Methanopyrus kandleri (strain AV19 / DSM 6324 / JCM 9639 / NBRC 100938).